The chain runs to 179 residues: Apoptosis regulator DPV022 (179 aa).

Residues 148 to 170 traverse the membrane as a helical segment; the sequence is VLITNYLKITIFGAILGITAYYI.

As to quaternary structure, interacts with host BAX and BAK1.

The protein localises to the host mitochondrion. It localises to the host membrane. In terms of biological role, plays a role in the inhibition of host apoptosis by sequestering and inactivating several proapoptotic BCL-2 proteins, including BAK1 and BAX. Prevents the conformational activation of both of them. The sequence is that of Apoptosis regulator DPV022 (DPV022) from Deerpox virus (strain Mule deer/United States/W-848-83/1983) (DPV).